Here is a 72-residue protein sequence, read N- to C-terminus: MARDDVIEVDGKVIEALPNATFKVELDNKHVVLCRISGKMRMHYIRIALGDRVKLELTPYSLDRGRITFRYK.

The S1-like domain occupies 1–72; that stretch reads MARDDVIEVD…DRGRITFRYK (72 aa).

It belongs to the IF-1 family. As to quaternary structure, component of the 30S ribosomal translation pre-initiation complex which assembles on the 30S ribosome in the order IF-2 and IF-3, IF-1 and N-formylmethionyl-tRNA(fMet); mRNA recruitment can occur at any time during PIC assembly.

It is found in the cytoplasm. Functionally, one of the essential components for the initiation of protein synthesis. Stabilizes the binding of IF-2 and IF-3 on the 30S subunit to which N-formylmethionyl-tRNA(fMet) subsequently binds. Helps modulate mRNA selection, yielding the 30S pre-initiation complex (PIC). Upon addition of the 50S ribosomal subunit IF-1, IF-2 and IF-3 are released leaving the mature 70S translation initiation complex. The protein is Translation initiation factor IF-1 of Helicobacter acinonychis (strain Sheeba).